A 218-amino-acid polypeptide reads, in one-letter code: Large ribosomal subunit protein uL3 (218 aa).

The disordered stretch occupies residues 132 to 152 (FKGQGASHGTQAVHRRPGSIG).

The protein belongs to the universal ribosomal protein uL3 family. In terms of assembly, part of the 50S ribosomal subunit. Forms a cluster with proteins L14 and L19.

One of the primary rRNA binding proteins, it binds directly near the 3'-end of the 23S rRNA, where it nucleates assembly of the 50S subunit. The chain is Large ribosomal subunit protein uL3 from Rhodococcus erythropolis (strain PR4 / NBRC 100887).